A 239-amino-acid polypeptide reads, in one-letter code: Carboxy-S-adenosyl-L-methionine synthase (239 aa).

Residues Y35, 64-66 (GCS), 88-89 (DN), and R195 each bind S-adenosyl-L-methionine.

It belongs to the class I-like SAM-binding methyltransferase superfamily. Cx-SAM synthase family. As to quaternary structure, homodimer.

The enzyme catalyses prephenate + S-adenosyl-L-methionine = carboxy-S-adenosyl-L-methionine + 3-phenylpyruvate + H2O. Catalyzes the conversion of S-adenosyl-L-methionine (SAM) to carboxy-S-adenosyl-L-methionine (Cx-SAM). This is Carboxy-S-adenosyl-L-methionine synthase from Helicobacter pylori (strain HPAG1).